The sequence spans 874 residues: Bifunctional apolipoprotein N-acyltransferase/polyprenol monophosphomannose synthase (874 aa).

The segment at 1-593 is apolipoprotein N-acyltransferase; the sequence is MKLGAWVAAQ…GRHRATSRSY (593 aa). Helical transmembrane passes span 23-42, 72-89, 94-115, 177-194, and 206-223; these read TRLV…FPPR, YGLL…PWIG, PGPW…GLFA, VALV…IEKW, and AVVL…AAIV. Residues 241–497 enclose the CN hydrolase domain; sequence VTVAVVQGNV…PAYLDSQVRL (257 aa). Glu-294 (proton acceptor) is an active-site residue. Residue Lys-359 is part of the active site. The Nucleophile role is filled by Cys-409. A helical transmembrane segment spans residues 509–526; it reads PILQWILVGAAAAVVLVA. Disordered regions lie at residues 533-609 and 852-874; these read FPRP…NRPS and RARP…DVTE. Positions 594 to 874 are polyprenol monophosphomannose synthase; that stretch reads MTTGQPAPPA…SRVSRADVTE (281 aa).

This sequence in the N-terminal section; belongs to the CN hydrolase family. Apolipoprotein N-acyltransferase subfamily. It in the C-terminal section; belongs to the glycosyltransferase 2 family.

Its subcellular location is the cell membrane. It catalyses the reaction N-terminal S-1,2-diacyl-sn-glyceryl-L-cysteinyl-[lipoprotein] + a glycerophospholipid = N-acyl-S-1,2-diacyl-sn-glyceryl-L-cysteinyl-[lipoprotein] + a 2-acyl-sn-glycero-3-phospholipid + H(+). It carries out the reaction a di-trans,poly-cis-dolichyl phosphate + GDP-alpha-D-mannose = a di-trans,poly-cis-dolichyl beta-D-mannosyl phosphate + GDP. The protein operates within protein modification; lipoprotein biosynthesis (N-acyl transfer). In terms of biological role, catalyzes the phospholipid dependent N-acylation of the N-terminal cysteine of apolipoprotein, the last step in lipoprotein maturation. Functionally, transfers mannose from GDP-mannose to lipid acceptors to form polyprenol monophosphomannose (PPM). PMM is an alkai-stable sugar donor which adds mannose-phosphate residues to triacylated-phosphatidyl-myo-inositol mannosides (PIM2), eventually leading to generation of the cell wall glycolipid lipoglycan modulins lipoarabinomannan (LAM) and lipomannan (LM). The chain is Bifunctional apolipoprotein N-acyltransferase/polyprenol monophosphomannose synthase from Mycobacterium bovis (strain BCG / Pasteur 1173P2).